A 1171-amino-acid chain; its full sequence is DNA-directed RNA polymerase subunit beta' (1171 aa).

Positions 60, 62, 75, and 78 each coordinate Zn(2+). The interval glycine 299 to methionine 319 is disordered. 3 residues coordinate Mg(2+): aspartate 449, aspartate 451, and aspartate 453. Zn(2+) is bound by residues cysteine 790, cysteine 864, cysteine 871, and cysteine 874.

It belongs to the RNA polymerase beta' chain family. As to quaternary structure, the RNAP catalytic core consists of 2 alpha, 1 beta, 1 beta' and 1 omega subunit. When a sigma factor is associated with the core the holoenzyme is formed, which can initiate transcription. Requires Mg(2+) as cofactor. The cofactor is Zn(2+).

The enzyme catalyses RNA(n) + a ribonucleoside 5'-triphosphate = RNA(n+1) + diphosphate. In terms of biological role, DNA-dependent RNA polymerase catalyzes the transcription of DNA into RNA using the four ribonucleoside triphosphates as substrates. The protein is DNA-directed RNA polymerase subunit beta' of Alkaliphilus metalliredigens (strain QYMF).